The chain runs to 104 residues: Replication restart protein PriB (104 aa).

The region spanning Met-1 to Asp-101 is the SSB domain.

This sequence belongs to the PriB family. Homodimer. Interacts with PriA and DnaT. Component of the replication restart primosome. Primosome assembly occurs via a 'hand-off' mechanism. PriA binds to replication forks, subsequently PriB then DnaT bind; DnaT then displaces ssDNA to generate the helicase loading substrate.

Involved in the restart of stalled replication forks, which reloads the replicative helicase on sites other than the origin of replication; the PriA-PriB pathway is the major replication restart pathway. During primosome assembly it facilitates complex formation between PriA and DnaT on DNA; stabilizes PriA on DNA. Stimulates the DNA unwinding activity of PriA helicase. In Escherichia coli (strain ATCC 8739 / DSM 1576 / NBRC 3972 / NCIMB 8545 / WDCM 00012 / Crooks), this protein is Replication restart protein PriB.